We begin with the raw amino-acid sequence, 716 residues long: Protein Hook homolog 2 (716 aa).

The interval 1–161 (MSVDKAELCG…ELMTKDTPDS (161 aa)) is required for localization to the centrosome and induction of aggresome formation. A sufficient for interaction with microtubules region spans residues 1–546 (MSVDKAELCG…LKRKLEDHLQ (546 aa)). The Calponin-homology (CH) domain occupies 6 to 122 (AELCGSLLTW…KLLQLVLGCA (117 aa)). S163 is subject to Phosphoserine. 2 coiled-coil regions span residues 188–427 (DHLQ…AQLQ) and 455–605 (AELR…VDKA). Positions 533–716 (DPTLLKRKLE…ALSLRPTDKH (184 aa)) are required for localization to the centrosome and induction of aggresome formation. A sufficient for interaction with CNTRL region spans residues 582–716 (DSLQKKDADL…ALSLRPTDKH (135 aa)).

This sequence belongs to the hook family. In terms of assembly, self-associates. Component of the FTS/Hook/FHIP complex (FHF complex), composed of AKTIP/FTS, FHIP1B, and one or more members of the Hook family of proteins HOOK1, HOOK2, and HOOK3. May interact directly with AKTIP/FTS, HOOK1 and HOOK3. Associates with several subunits of the homotypic vesicular sorting complex (the HOPS complex) including VPS16 and VPS41; these interactions may be indirect. Interacts with CNTRL. Interacts with microtubules. Interacts with ZC3H14. Interacts with LRGUK (via guanylate kinase-like domain). Interacts with CCDC181. Interacts with AP4M1; the interaction is direct, mediates the interaction between FTS-Hook-FHIP (FHF) complex and AP-4 and the perinuclear distribution of AP-4. As to expression, expressed in brain, cerebellum, kidney, liver and heart, with highest levels in heart and kidney (at protein level).

The protein resides in the cytoplasm. Its subcellular location is the cytoskeleton. The protein localises to the microtubule organizing center. It localises to the centrosome. It is found in the golgi apparatus. The protein resides in the trans-Golgi network. In terms of biological role, component of the FTS/Hook/FHIP complex (FHF complex). The FHF complex may function to promote vesicle trafficking and/or fusion via the homotypic vesicular protein sorting complex (the HOPS complex). Contributes to the establishment and maintenance of centrosome function. May function in the positioning or formation of aggresomes, which are pericentriolar accumulations of misfolded proteins, proteasomes and chaperones. FHF complex promotes the distribution of AP-4 complex to the perinuclear area of the cell. The chain is Protein Hook homolog 2 (Hook2) from Mus musculus (Mouse).